Here is a 114-residue protein sequence, read N- to C-terminus: Large ribosomal subunit protein uL22 (114 aa).

This sequence belongs to the universal ribosomal protein uL22 family. As to quaternary structure, part of the 50S ribosomal subunit.

Functionally, this protein binds specifically to 23S rRNA; its binding is stimulated by other ribosomal proteins, e.g. L4, L17, and L20. It is important during the early stages of 50S assembly. It makes multiple contacts with different domains of the 23S rRNA in the assembled 50S subunit and ribosome. The globular domain of the protein is located near the polypeptide exit tunnel on the outside of the subunit, while an extended beta-hairpin is found that lines the wall of the exit tunnel in the center of the 70S ribosome. This chain is Large ribosomal subunit protein uL22, found in Streptococcus uberis (strain ATCC BAA-854 / 0140J).